The primary structure comprises 299 residues: Taste receptor type 2 member 16 (299 aa).

At methionine 1 to glutamine 5 the chain is on the extracellular side. A helical transmembrane segment spans residues valine 6 to cysteine 26. The Cytoplasmic portion of the chain corresponds to threonine 27–threonine 47. Residues isoleucine 48–phenylalanine 68 traverse the membrane as a helical segment. The Extracellular portion of the chain corresponds to glycine 69–serine 82. A helical membrane pass occupies residues valine 83 to tyrosine 103. Topologically, residues cysteine 104–leucine 125 are cytoplasmic. The chain crosses the membrane as a helical span at residues valine 126–valine 146. At lysine 147 to methionine 183 the chain is on the extracellular side. Asparagine 163 carries an N-linked (GlcNAc...) asparagine glycan. Residues isoleucine 184–leucine 204 form a helical membrane-spanning segment. At valine 205 to threonine 233 the chain is on the cytoplasmic side. A helical membrane pass occupies residues phenylalanine 234–phenylalanine 254. Topologically, residues aspartate 255 to serine 258 are extracellular. Residues tryptophan 259–methionine 279 form a helical membrane-spanning segment. At methionine 280 to serine 299 the chain is on the cytoplasmic side.

Belongs to the G-protein coupled receptor T2R family. Interacts with RTP3 and RTP4.

The protein localises to the cell membrane. Gustducin-coupled receptor implicated in the perception of bitter compounds in the oral cavity and the gastrointestinal tract. Signals through PLCB2 and the calcium-regulated cation channel TRPM5. The polypeptide is Taste receptor type 2 member 16 (Tas2r16) (Mus musculus (Mouse)).